The sequence spans 130 residues: Interferon alpha-inducible protein 27-like protein 2 (130 aa).

3 helical membrane-spanning segments follow: residues 8–28 (AAVGGALAVGAVPVVLSAMGF), 43–63 (MSAAAIANGGGVSAGSLVATL), and 66–86 (VGAAGLSTSSNILLASVGSVL). The segment at 93 to 130 (SPSSSLPAEPEAKEDEARENVPQGEPPKPPLKSEKHEE) is disordered.

The protein belongs to the IFI6/IFI27 family.

Its subcellular location is the mitochondrion membrane. Its function is as follows. Plays a role in the apoptotic process and has a pro-apoptotic activity. This is Interferon alpha-inducible protein 27-like protein 2 from Homo sapiens (Human).